The chain runs to 260 residues: Histidine-binding periplasmic protein (260 aa).

Residues 1–22 form the signal peptide; sequence MKKLVLSLSLVLAFSSATAAFA. The cysteines at positions 60 and 67 are disulfide-linked. Residues Ser91, Ser92, Ser94, Arg99, Thr143, and Asp183 each contribute to the L-histidine site.

It belongs to the bacterial solute-binding protein 3 family. In terms of assembly, the complex is composed of two ATP-binding proteins (HisP), two transmembrane proteins (HisM and HisQ) and a solute-binding protein (HisJ).

The protein localises to the periplasm. Its function is as follows. Part of the ABC transporter complex HisPMQJ involved in histidine transport. Binds histidine. Interacts with HisQMP and stimulates ATPase activity of HisP, which results in histidine translocation. This chain is Histidine-binding periplasmic protein (hisJ), found in Escherichia coli O157:H7.